Consider the following 338-residue polypeptide: Phenylalanine--tRNA ligase alpha subunit (338 aa).

Glutamate 252 serves as a coordination point for Mg(2+).

This sequence belongs to the class-II aminoacyl-tRNA synthetase family. Phe-tRNA synthetase alpha subunit type 1 subfamily. Tetramer of two alpha and two beta subunits. Requires Mg(2+) as cofactor.

The protein localises to the cytoplasm. The enzyme catalyses tRNA(Phe) + L-phenylalanine + ATP = L-phenylalanyl-tRNA(Phe) + AMP + diphosphate + H(+). The polypeptide is Phenylalanine--tRNA ligase alpha subunit (Pseudomonas putida (strain ATCC 700007 / DSM 6899 / JCM 31910 / BCRC 17059 / LMG 24140 / F1)).